Consider the following 373-residue polypeptide: MKTAHTIVVFGGDYCGPEVMKEGLKVLSEIERQNPDVKLELIHHLVGGAAWDVHGENITTAALSDATSASAVLLGAVGGPKWAKHAIPVEWGLGRLRKALDAFGNLRPVNFAAPSLISRSSLKPKVCTGTEILIVRELTGGVYFGPRSEHDGSFDQASDTDVYTRKEIERVTRLAGSLAMARDPPLAVTSLDKANVLAACGRLWRGVVSEVMAAEFPEIELRHMLIDSAAMVMALNPTKLNGVVLASNMFGDIISDQASAIPGSIGLLPSASLCSIPERGQESSRIRGLYEPIHGSAPDIAGKGIVNPIGMILSVAMMCRLSLDMGAAATSIEAAVRDTLEVGICTPDIGGTASTSEVGDAVVAALVRIFDKH.

77–79 (VGG) is an NADP(+) binding site. Substrate contacts are provided by Arg97 and Arg136. Residues Asp227, Asp252, and Asp256 each coordinate Mg(2+). An NADP(+)-binding site is contributed by 284–289 (SRIRGL).

It belongs to the isocitrate and isopropylmalate dehydrogenases family. Homodimer. It depends on Mg(2+) as a cofactor. Mn(2+) is required as a cofactor.

It carries out the reaction (2R,3S)-3-isopropylmalate + NAD(+) = 4-methyl-2-oxopentanoate + CO2 + NADH. Its pathway is amino-acid biosynthesis; L-leucine biosynthesis; L-leucine from 3-methyl-2-oxobutanoate: step 3/4. The protein operates within mycotoxin biosynthesis. 3-isopropylmalate dehydrogenase; part of the gene clusters that mediate the biosynthesis of AM-toxins, host-selective toxins (HSTs) causing Alternaria blotch on apple, a worldwide distributed disease. AM-toxins are cyclic depsipeptides containing the 3 residues 2-hydroxy-isovaleric acid (2-HIV), dehydroalanine, L-alanine which are common for all 3 AM-toxins I to III. The fourth precursor is L-alpha-amino-methoxyphenyl-valeric acid (L-Amv) for AM-toxin I, L-alpha-amino-phenyl-valeric acid (L-Apv) for AM-toxin II, and L-alpha-amino-hydroxyphenyl-valeric acid (L-Ahv) for AM-toxin III. AM-toxins have two target sites for affecting susceptible apple cells; they cause invagination of the plasma membrane and electrolyte loss and chloroplast disorganization. The non-ribosomal peptide synthetase AMT1 contains 4 catalytic modules and is responsible for activation of each residue in AM-toxin. The aldo-keto reductase AMT2 catalyzes the conversion of 2-keto-isovaleric acid (2-KIV) to 2-hydroxy-isovaleric acid (2-HIV), one of the precursor residues incorporated by AMT1 during AM-toxin biosynthesis, by reduction of its ketone to an alcohol. The cytochrome P450 monooxygenase AMT3 and the thioesterase AMT4 are also important for AM-toxin production, but their exact function within the AM-toxin biosynthesis are not known yet. Up to 21 proteins (including AMT1 to AMT4) are predicted to be involved in AM-toxin biosynthesis since their expression ishighly up-regulated in AM-toxin-producing cultures. This Alternaria alternata (Alternaria rot fungus) protein is 3-isopropylmalate dehydrogenase AMT6.